Reading from the N-terminus, the 115-residue chain is uncharacterized protein (115 aa).

The next 3 membrane-spanning stretches (helical) occupy residues 23–43 (LVYAALAFVGGFAVWFSLFFA), 63–83 (AMVTMWIGVGAVLLLTLVVMV), and 90–110 (NVVIGWPFVGLLALGLVYVAA).

The protein resides in the cell membrane. This is an uncharacterized protein from Mycobacterium bovis (strain ATCC BAA-935 / AF2122/97).